The sequence spans 167 residues: Endoribonuclease YbeY (167 aa).

Residues histidine 131, histidine 135, and histidine 141 each contribute to the Zn(2+) site.

It belongs to the endoribonuclease YbeY family. It depends on Zn(2+) as a cofactor.

It is found in the cytoplasm. Single strand-specific metallo-endoribonuclease involved in late-stage 70S ribosome quality control and in maturation of the 3' terminus of the 16S rRNA. The protein is Endoribonuclease YbeY of Rickettsia felis (strain ATCC VR-1525 / URRWXCal2) (Rickettsia azadi).